Consider the following 514-residue polypeptide: Extracellular exo-inulinase inuE (514 aa).

An N-terminal signal peptide occupies residues 1–18 (MRAFLALIFLTFVMNVES). Residues 33-34 (ND) and Q52 each bind substrate. Residue D34 is the Nucleophile of the active site. N-linked (GlcNAc...) asparagine glycosylation is present at N56. Positions 60 and 95 each coordinate substrate. N-linked (GlcNAc...) asparagine glycans are attached at residues N104 and N110. Residue 162–163 (RD) coordinates substrate. N-linked (GlcNAc...) asparagine glycosylation is found at N197 and N203. E214 and W300 together coordinate substrate. E214 serves as the catalytic Proton donor/acceptor. Residues N357, N371, N389, and N422 are each glycosylated (N-linked (GlcNAc...) asparagine).

This sequence belongs to the glycosyl hydrolase 32 family.

The protein localises to the secreted. It catalyses the reaction Hydrolysis of terminal, non-reducing (2-&gt;1)- and (2-&gt;6)-linked beta-D-fructofuranose residues in fructans.. Its function is as follows. Exo-inulinase involved in utilization of the plant storage polymer inulin, consisting of fructooligosaccharides with a degree of polymerization (DP) value from 2 to 60. Splits off terminal fructose units successively from the non-reducing end of the inulin molecule. This Meyerozyma guilliermondii (Yeast) protein is Extracellular exo-inulinase inuE.